The primary structure comprises 735 residues: Phosphoribosylformylglycinamidine synthase subunit PurL (735 aa).

His50 is a catalytic residue. The ATP site is built by Tyr53 and Lys92. Residue Glu94 participates in Mg(2+) binding. Substrate contacts are provided by residues Ser95–His98 and Arg117. His96 serves as the catalytic Proton acceptor. Mg(2+) is bound at residue Asp118. Gln241 provides a ligand contact to substrate. Asp269 serves as a coordination point for Mg(2+). Residue Glu313–Gln315 participates in substrate binding. Positions 495 and 532 each coordinate ATP. Residue Asn533 participates in Mg(2+) binding. Ser535 provides a ligand contact to substrate.

Belongs to the FGAMS family. Monomer. Part of the FGAM synthase complex composed of 1 PurL, 1 PurQ and 2 PurS subunits.

It localises to the cytoplasm. The catalysed reaction is N(2)-formyl-N(1)-(5-phospho-beta-D-ribosyl)glycinamide + L-glutamine + ATP + H2O = 2-formamido-N(1)-(5-O-phospho-beta-D-ribosyl)acetamidine + L-glutamate + ADP + phosphate + H(+). Its pathway is purine metabolism; IMP biosynthesis via de novo pathway; 5-amino-1-(5-phospho-D-ribosyl)imidazole from N(2)-formyl-N(1)-(5-phospho-D-ribosyl)glycinamide: step 1/2. Part of the phosphoribosylformylglycinamidine synthase complex involved in the purines biosynthetic pathway. Catalyzes the ATP-dependent conversion of formylglycinamide ribonucleotide (FGAR) and glutamine to yield formylglycinamidine ribonucleotide (FGAM) and glutamate. The FGAM synthase complex is composed of three subunits. PurQ produces an ammonia molecule by converting glutamine to glutamate. PurL transfers the ammonia molecule to FGAR to form FGAM in an ATP-dependent manner. PurS interacts with PurQ and PurL and is thought to assist in the transfer of the ammonia molecule from PurQ to PurL. In Bartonella henselae (strain ATCC 49882 / DSM 28221 / CCUG 30454 / Houston 1) (Rochalimaea henselae), this protein is Phosphoribosylformylglycinamidine synthase subunit PurL.